Here is a 673-residue protein sequence, read N- to C-terminus: UvrABC system protein B (673 aa).

The Helicase ATP-binding domain maps to Glu-26–Arg-183. Gly-39–Thr-46 contributes to the ATP binding site. The Beta-hairpin signature appears at Tyr-92–Val-115. Residues Gln-431–Leu-597 form the Helicase C-terminal domain. Positions Gln-633–Leu-668 constitute a UVR domain.

Belongs to the UvrB family. Forms a heterotetramer with UvrA during the search for lesions. Interacts with UvrC in an incision complex.

The protein localises to the cytoplasm. Functionally, the UvrABC repair system catalyzes the recognition and processing of DNA lesions. A damage recognition complex composed of 2 UvrA and 2 UvrB subunits scans DNA for abnormalities. Upon binding of the UvrA(2)B(2) complex to a putative damaged site, the DNA wraps around one UvrB monomer. DNA wrap is dependent on ATP binding by UvrB and probably causes local melting of the DNA helix, facilitating insertion of UvrB beta-hairpin between the DNA strands. Then UvrB probes one DNA strand for the presence of a lesion. If a lesion is found the UvrA subunits dissociate and the UvrB-DNA preincision complex is formed. This complex is subsequently bound by UvrC and the second UvrB is released. If no lesion is found, the DNA wraps around the other UvrB subunit that will check the other stand for damage. This chain is UvrABC system protein B, found in Klebsiella pneumoniae subsp. pneumoniae (strain ATCC 700721 / MGH 78578).